The primary structure comprises 61 residues: Metallothionein-1A (61 aa).

M1 bears the N-acetylmethionine mark. A beta region spans residues 1-29 (MDPNCSCPTGGSCSCAGSCTCKACRCPSC). Positions 5, 7, 13, 15, 19, 21, 24, 26, 29, 33, 34, 36, 37, 41, 44, 48, 50, and 57 each coordinate a divalent metal cation. Positions 30–61 (KKSCCSCCPVGCAKCAQGCVCKGASDKCSCCA) are alpha. At S58 the chain carries Phosphoserine. A divalent metal cation contacts are provided by C59 and C60.

Belongs to the metallothionein superfamily. Type 1 family. As to quaternary structure, monomer.

Metallothioneins have a high content of cysteine residues that bind various heavy metals; these proteins are transcriptionally regulated by both heavy metals and glucocorticoids. The chain is Metallothionein-1A (MT1A) from Bos taurus (Bovine).